The primary structure comprises 557 residues: Urocanate hydratase (557 aa).

NAD(+) is bound by residues 53–54 (GG), glutamine 131, 177–179 (GMG), glutamate 197, arginine 202, 243–244 (NA), 264–268 (QTSAH), 274–275 (YL), and tyrosine 323. Residue cysteine 411 is part of the active site. Residues 445 to 464 (LDSGSVSSPNRETESMRDGS) are disordered. Positions 455 to 464 (RETESMRDGS) are enriched in basic and acidic residues. Position 493 (glycine 493) interacts with NAD(+).

Belongs to the urocanase family. It depends on NAD(+) as a cofactor.

The protein resides in the cytoplasm. It carries out the reaction 4-imidazolone-5-propanoate = trans-urocanate + H2O. The protein operates within amino-acid degradation; L-histidine degradation into L-glutamate; N-formimidoyl-L-glutamate from L-histidine: step 2/3. Its function is as follows. Catalyzes the conversion of urocanate to 4-imidazolone-5-propionate. The polypeptide is Urocanate hydratase (Pseudomonas putida (strain W619)).